The following is a 511-amino-acid chain: Ribosome biogenesis protein YTM1 (511 aa).

Residues 9–112 are ubiquitin-like (UBL) domain; that stretch reads VKVVFVTRDE…EVSLSIEYIR (104 aa). Positions 122 to 511 are sufficient for interaction with ERB1 and association with 66S pre-ribosomes; the sequence is SFSNPDWVAA…IQINNNPQSA (390 aa). 7 WD repeats span residues 124 to 168, 170 to 208, 248 to 287, 332 to 372, 383 to 423, 429 to 470, and 477 to 511; these read SNPD…TGQL, GHNS…YRRK, GHTA…MPAI, GHSA…AVQS, TRST…QVAT, GHTN…SLHV, and TENN…PQSA. Residues 207–228 are disordered; sequence RKEPGQVGKKELNYDSEEDSDE. Residues 208 to 219 are compositionally biased toward basic and acidic residues; sequence KEPGQVGKKELN.

Belongs to the WD repeat WDR12/YTM1 family. In terms of assembly, component of the NOP7 complex, composed of ERB1, NOP7 and YTM1. The complex is held together by ERB1, which interacts with NOP7 via its N-terminal domain and with YTM1 via a high-affinity interaction between the seven-bladed beta-propeller domains of the 2 proteins. The NOP7 complex associates with the 66S pre-ribosome. Interacts (via UBL domain) with MDN1 (via VWFA/MIDAS domain).

It localises to the nucleus. The protein resides in the nucleolus. The protein localises to the nucleoplasm. Component of the NOP7 complex, which is required for maturation of the 25S and 5.8S ribosomal RNAs and formation of the 60S ribosome. This chain is Ribosome biogenesis protein YTM1, found in Yarrowia lipolytica (strain CLIB 122 / E 150) (Yeast).